The chain runs to 374 residues: uncharacterized protein (374 aa).

Low complexity predominate over residues 86-104 (RPAATAGTTPATGASGSAR). Residues 86-109 (RPAATAGTTPATGASGSARPTDAA) form a disordered region. A Macro domain is found at 179-354 (WWRRSNTTRG…LQRVVFAVHG (176 aa)).

This is an uncharacterized protein from Mycobacterium tuberculosis (strain CDC 1551 / Oshkosh).